A 175-amino-acid chain; its full sequence is MNCPYCSHPDSKVIDSRDVDDGVRRRRECVVCGQRFTTYERFQPAGLFVVKKDQRREEFNKEKLLSGLRRACEKRPLPAGAVDKVAGDIEAELYNMGKAEIPSTLLGDMVMERLKMLDNIAYVRFASVYREFTDITQLKKVVDNLVNGQDEGIYKGQLSLLPEDKAVPKTRYQRR.

Residues C3 to C32 fold into a zinc finger. The 91-residue stretch at L47–Q137 folds into the ATP-cone domain.

Belongs to the NrdR family. Requires Zn(2+) as cofactor.

In terms of biological role, negatively regulates transcription of bacterial ribonucleotide reductase nrd genes and operons by binding to NrdR-boxes. This chain is Transcriptional repressor NrdR, found in Dehalococcoides mccartyi (strain CBDB1).